The sequence spans 213 residues: Probable nicotinate-nucleotide adenylyltransferase (213 aa).

The protein belongs to the NadD family.

It carries out the reaction nicotinate beta-D-ribonucleotide + ATP + H(+) = deamido-NAD(+) + diphosphate. It functions in the pathway cofactor biosynthesis; NAD(+) biosynthesis; deamido-NAD(+) from nicotinate D-ribonucleotide: step 1/1. Catalyzes the reversible adenylation of nicotinate mononucleotide (NaMN) to nicotinic acid adenine dinucleotide (NaAD). In Shigella boydii serotype 4 (strain Sb227), this protein is Probable nicotinate-nucleotide adenylyltransferase.